Here is a 217-residue protein sequence, read N- to C-terminus: Peroxiredoxin (217 aa).

The Thioredoxin domain occupies 2-159 (PVIGEKFPEV…IVRLVKALQV (158 aa)). Catalysis depends on Cys-46, which acts as the Cysteine sulfenic acid (-SOH) intermediate. Arg-122 serves as a coordination point for substrate. A disulfide bridge connects residues Cys-206 and Cys-212.

The protein belongs to the peroxiredoxin family. Prx6 subfamily. As to quaternary structure, homodecamer. Pentamer of dimers that assemble into a ring structure.

It localises to the cytoplasm. The catalysed reaction is a hydroperoxide + [thioredoxin]-dithiol = an alcohol + [thioredoxin]-disulfide + H2O. In terms of biological role, thiol-specific peroxidase that catalyzes the reduction of hydrogen peroxide and organic hydroperoxides to water and alcohols, respectively. Plays a role in cell protection against oxidative stress by detoxifying peroxides. The chain is Peroxiredoxin from Methanocaldococcus jannaschii (strain ATCC 43067 / DSM 2661 / JAL-1 / JCM 10045 / NBRC 100440) (Methanococcus jannaschii).